The following is a 468-amino-acid chain: Immunoglobulin superfamily member 21 (468 aa).

The signal sequence occupies residues 1–24; sequence MRAAPSLRRASCLLLAAILDLARG. Ig-like domains lie at 25 to 132 and 344 to 429; these read YLTV…VVLA and PKIM…TRLI. A disulfide bridge connects residues Cys46 and Cys116.

Interacts (Ig-like 1 domain) with NRXN2 (via Laminin G-like 1 domain) in a trans-interaction manner. In terms of tissue distribution, expressed in brain.

The protein localises to the postsynaptic cell membrane. Functionally, involved in synaptic inhibition in the brain. Selectively regulates inhibitory presynaptic differentiation through interacting with presynaptic NRXN2. This is Immunoglobulin superfamily member 21 from Rattus norvegicus (Rat).